A 113-amino-acid polypeptide reads, in one-letter code: UPF0482 protein YnfB (113 aa).

The N-terminal stretch at 1 to 28 (MNILSGKLPFLLGAVFAGSVVLATSVQA) is a signal peptide.

This sequence belongs to the UPF0482 family.

The protein is UPF0482 protein YnfB of Escherichia fergusonii (strain ATCC 35469 / DSM 13698 / CCUG 18766 / IAM 14443 / JCM 21226 / LMG 7866 / NBRC 102419 / NCTC 12128 / CDC 0568-73).